A 136-amino-acid chain; its full sequence is Large ribosomal subunit protein uL16 (136 aa).

It belongs to the universal ribosomal protein uL16 family. Part of the 50S ribosomal subunit.

Its function is as follows. Binds 23S rRNA and is also seen to make contacts with the A and possibly P site tRNAs. The polypeptide is Large ribosomal subunit protein uL16 (Ruthia magnifica subsp. Calyptogena magnifica).